The primary structure comprises 86 residues: Large ribosomal subunit protein bL31B (86 aa).

This sequence belongs to the bacterial ribosomal protein bL31 family. Type B subfamily. In terms of assembly, part of the 50S ribosomal subunit.

This is Large ribosomal subunit protein bL31B from Vibrio parahaemolyticus serotype O3:K6 (strain RIMD 2210633).